We begin with the raw amino-acid sequence, 1547 residues long: RNA replication protein (1547 aa).

Residues 59-227 (NPFAVKAHTH…IHKYEQLEWI (169 aa)) enclose the Alphavirus-like MT domain. Basic and acidic residues-rich tracts occupy residues 477 to 495 (AKEA…KEEQ) and 503 to 522 (RAEE…EPNP). Residues 477-523 (AKEAEATDEPQRPEVKEEQAEASTSGRAEEIQEDPATKKGKEEPNPN) form a disordered region. Residues 599–690 (EFNQCLVQQF…RVSLTFRCTV (92 aa)) form the Fe2OG dioxygenase domain. In terms of domain architecture, (+)RNA virus helicase ATP-binding spans 793-948 (LRQQGKEWGC…EASELCRYYI (156 aa)). 822–829 (GAGGSGKS) provides a ligand contact to ATP. Residues 949–1082 (NATHRNKKDL…TLREEVAQPI (134 aa)) enclose the (+)RNA virus helicase C-terminal domain. In terms of domain architecture, RdRp catalytic spans 1324 to 1431 (GPSLANDFTA…DGLPALRPSF (108 aa)).

Belongs to the potexvirus/carlavirus RNA replication protein family.

It carries out the reaction RNA(n) + a ribonucleoside 5'-triphosphate = RNA(n+1) + diphosphate. The catalysed reaction is ATP + H2O = ADP + phosphate + H(+). In terms of biological role, RNA replication. The central part of this protein possibly functions as an ATP-binding helicase. This Papaya mosaic potexvirus (PMV) protein is RNA replication protein.